A 256-amino-acid chain; its full sequence is Biosynthetic peptidoglycan transglycosylase (256 aa).

A helical transmembrane segment spans residues 26–48 (VARWLAYAGGVFAGAWLATQLYY).

This sequence belongs to the glycosyltransferase 51 family.

The protein resides in the cell inner membrane. The enzyme catalyses [GlcNAc-(1-&gt;4)-Mur2Ac(oyl-L-Ala-gamma-D-Glu-L-Lys-D-Ala-D-Ala)](n)-di-trans,octa-cis-undecaprenyl diphosphate + beta-D-GlcNAc-(1-&gt;4)-Mur2Ac(oyl-L-Ala-gamma-D-Glu-L-Lys-D-Ala-D-Ala)-di-trans,octa-cis-undecaprenyl diphosphate = [GlcNAc-(1-&gt;4)-Mur2Ac(oyl-L-Ala-gamma-D-Glu-L-Lys-D-Ala-D-Ala)](n+1)-di-trans,octa-cis-undecaprenyl diphosphate + di-trans,octa-cis-undecaprenyl diphosphate + H(+). Its pathway is cell wall biogenesis; peptidoglycan biosynthesis. Peptidoglycan polymerase that catalyzes glycan chain elongation from lipid-linked precursors. The polypeptide is Biosynthetic peptidoglycan transglycosylase (Burkholderia thailandensis (strain ATCC 700388 / DSM 13276 / CCUG 48851 / CIP 106301 / E264)).